The chain runs to 811 residues: Protein MEI2-like 5 (811 aa).

2 RRM domains span residues 193–266 (RTLF…YSIP) and 278–351 (GTLV…PSRP). The tract at residues 371–397 (TKHNSFQIGSPSANSPPSLWSQLGSPT) is disordered. Residues 374–397 (NSFQIGSPSANSPPSLWSQLGSPT) are compositionally biased toward polar residues.

Functionally, probable RNA-binding protein that may play a role in growth regulation. The protein is Protein MEI2-like 5 (ML5) of Oryza sativa subsp. japonica (Rice).